A 701-amino-acid polypeptide reads, in one-letter code: Aryl hydrocarbon receptor repressor (701 aa).

The 54-residue stretch at 25–78 folds into the bHLH domain; that stretch reads TMGAEKSNPSKRHRDRLNTELDHLASLLPFSPDIISKLDKLSVLRLSVSYLRVK. In terms of domain architecture, PAS spans 106-176; the sequence is PVQEGRLLLE…RQLHWAMDPP (71 aa). Positions 409–430 are enriched in polar residues; the sequence is TEQRSQESTTKLTRQPSKNEPS. Residues 409 to 432 are disordered; it reads TEQRSQESTTKLTRQPSKNEPSTC. Residues 555-701 are needed for transcriptional repression; it reads ASTTSCLWLG…SKGSDGIFLP (147 aa). Residues Lys583 and Lys660 each participate in a glycyl lysine isopeptide (Lys-Gly) (interchain with G-Cter in SUMO2) cross-link.

In terms of assembly, interacts with ARNT, ANKRA2, HDAC4 and HDAC5. Interacts with ARNT; forms a heterodimer with ARNT.

It is found in the cytoplasm. It localises to the nucleus. Its function is as follows. Mediates dioxin toxicity and is involved in regulation of cell growth and differentiation. Represses the transcription activity of AHR by competing with this transcription factor for heterodimer formation with the ARNT and subsequently binding to the xenobiotic response element (XRE) sequence present in the promoter regulatory region of variety of genes. Represses CYP1A1 by binding the XRE sequence and recruiting ANKRA2, HDAC4 and/or HDAC5. Autoregulates its expression by associating with its own XRE site. This Mus musculus (Mouse) protein is Aryl hydrocarbon receptor repressor (Ahrr).